Here is a 349-residue protein sequence, read N- to C-terminus: Probable ethanolamine kinase A (349 aa).

It belongs to the choline/ethanolamine kinase family.

It localises to the cytoplasm. It carries out the reaction ethanolamine + ATP = phosphoethanolamine + ADP + H(+). It participates in phospholipid metabolism; phosphatidylethanolamine biosynthesis; phosphatidylethanolamine from ethanolamine: step 1/3. Functionally, highly specific for ethanolamine phosphorylation. May be a rate-controlling step in phosphatidylethanolamine biosynthesis. This chain is Probable ethanolamine kinase A (etnkA), found in Dictyostelium discoideum (Social amoeba).